We begin with the raw amino-acid sequence, 80 residues long: Acyl carrier protein (80 aa).

The region spanning 4 to 79 (NSIEEKVRSI…DVVAYIEKVQ (76 aa)) is the Carrier domain. S39 carries the post-translational modification O-(pantetheine 4'-phosphoryl)serine.

The protein belongs to the acyl carrier protein (ACP) family. In terms of processing, 4'-phosphopantetheine is transferred from CoA to a specific serine of apo-ACP by AcpS. This modification is essential for activity because fatty acids are bound in thioester linkage to the sulfhydryl of the prosthetic group.

Its subcellular location is the cytoplasm. Its pathway is lipid metabolism; fatty acid biosynthesis. Functionally, carrier of the growing fatty acid chain in fatty acid biosynthesis. The chain is Acyl carrier protein from Akkermansia muciniphila (strain ATCC BAA-835 / DSM 22959 / JCM 33894 / BCRC 81048 / CCUG 64013 / CIP 107961 / Muc).